Reading from the N-terminus, the 120-residue chain is Crustacean hyperglycemic hormones 1 (120 aa).

The signal sequence occupies residues 1–27; the sequence is MTAFRMVWSMLLASLLMLLVASSTAPA. 3 disulfides stabilise this stretch: Cys-53-Cys-89, Cys-69-Cys-85, and Cys-72-Cys-98. The residue at position 118 (Val-118) is a Valine amide.

It belongs to the arthropod CHH/MIH/GIH/VIH hormone family.

It is found in the secreted. Its function is as follows. Hormone found in the sinus gland of isopods and decapods which controls the blood sugar level. Has a secretagogue action over the amylase released from the midgut gland. May act as a stress hormone and may be involved in the control of molting and reproduction. The polypeptide is Crustacean hyperglycemic hormones 1 (CHH1) (Penaeus monodon (Giant tiger prawn)).